The following is a 652-amino-acid chain: ATP-dependent zinc metalloprotease FtsH 1 (652 aa).

Residues 1–9 lie on the Cytoplasmic side of the membrane; the sequence is MSDNKWLRN. A helical transmembrane segment spans residues 10–30; it reads GFVWMILIIAAIAVWVTFVQG. Over 31–110 the chain is Extracellular; the sequence is GRGGATITTQ…QTHRASQWGN (80 aa). A helical membrane pass occupies residues 111–131; that stretch reads VLGTLTFLLPTLFLIGVIIFM. Residues 132–652 are Cytoplasmic-facing; it reads MRQAQGTNNQ…VPHIKPQPAS (521 aa). 203-210 is an ATP binding site; sequence GPPGTGKT. His425 contacts Zn(2+). Residue Glu426 is part of the active site. 2 residues coordinate Zn(2+): His429 and Asp501. A disordered region spans residues 623–652; the sequence is IATPETARPDSPSEARPAAPVPHIKPQPAS. A compositionally biased stretch (pro residues) spans 641 to 652; it reads APVPHIKPQPAS.

It in the central section; belongs to the AAA ATPase family. In the C-terminal section; belongs to the peptidase M41 family. In terms of assembly, homohexamer. It depends on Zn(2+) as a cofactor.

Its subcellular location is the cell membrane. Its function is as follows. Acts as a processive, ATP-dependent zinc metallopeptidase for both cytoplasmic and membrane proteins. Plays a role in the quality control of integral membrane proteins. This is ATP-dependent zinc metalloprotease FtsH 1 from Thermomicrobium roseum (strain ATCC 27502 / DSM 5159 / P-2).